Here is a 223-residue protein sequence, read N- to C-terminus: Shematrin-like protein 2 (223 aa).

The first 19 residues, 1 to 19 (MRILANLILLGVLFGVCLC), serve as a signal peptide directing secretion.

Prismatic layer of shell (at protein level).

The protein localises to the secreted. In Margaritifera margaritifera (Freshwater pearl mussel), this protein is Shematrin-like protein 2.